A 576-amino-acid polypeptide reads, in one-letter code: Vacuolar protein sorting-associated protein vps5 (576 aa).

2 disordered regions span residues 1–60 (MLGH…PRKR) and 156–198 (DAAS…APQS). T55 carries the phosphothreonine modification. Residues 156–169 (DAASSSAPNFTHTV) show a composition bias toward polar residues. Positions 170 to 181 (SSASSQKQGSTS) are enriched in low complexity. Residues 200–317 (TPFYIQVHDP…KLFLEAETFD (118 aa)) enclose the PX domain. The a 1,2-diacyl-sn-glycero-3-phospho-(1D-myo-inositol-3-phosphate) site is built by R244, K270, and R284. A Phosphoserine modification is found at S332.

The protein belongs to the sorting nexin family. Component of the retromer complex which consists of vps29, vps26, vps35, vps5 and vps17.

The protein localises to the cytoplasm. It is found in the golgi apparatus. It localises to the membrane. Its function is as follows. Required for efficient sporulation target of PtdIns(3)P in vesicle transport required for onset of the forespore membrane formation. In terms of biological role, plays a role in vesicular protein sorting. Required for the endosome-to-Golgi retrieval of the vacuolar protein sorting receptor pep1/vps10. Component of the membrane-associated retromer complex which is essential in endosome-to-Golgi retrograde transport. The vps29-vps26-vps35 subcomplex may be involved in cargo selection. This chain is Vacuolar protein sorting-associated protein vps5 (vps5), found in Schizosaccharomyces pombe (strain 972 / ATCC 24843) (Fission yeast).